Here is a 273-residue protein sequence, read N- to C-terminus: Dermonecrotic toxin SdSicTox-betaIIB1bxiv (273 aa).

Residue histidine 4 is part of the active site. The Mg(2+) site is built by glutamate 24 and aspartate 26. Catalysis depends on histidine 40, which acts as the Nucleophile. 2 disulfides stabilise this stretch: cysteine 44–cysteine 50 and cysteine 46–cysteine 189. Aspartate 84 serves as a coordination point for Mg(2+).

The protein belongs to the arthropod phospholipase D family. Class II subfamily. Mg(2+) is required as a cofactor. As to expression, expressed by the venom gland.

The protein resides in the secreted. The catalysed reaction is an N-(acyl)-sphingosylphosphocholine = an N-(acyl)-sphingosyl-1,3-cyclic phosphate + choline. The enzyme catalyses an N-(acyl)-sphingosylphosphoethanolamine = an N-(acyl)-sphingosyl-1,3-cyclic phosphate + ethanolamine. It catalyses the reaction a 1-acyl-sn-glycero-3-phosphocholine = a 1-acyl-sn-glycero-2,3-cyclic phosphate + choline. It carries out the reaction a 1-acyl-sn-glycero-3-phosphoethanolamine = a 1-acyl-sn-glycero-2,3-cyclic phosphate + ethanolamine. Its function is as follows. Dermonecrotic toxins cleave the phosphodiester linkage between the phosphate and headgroup of certain phospholipids (sphingolipid and lysolipid substrates), forming an alcohol (often choline) and a cyclic phosphate. This toxin acts on sphingomyelin (SM). It may also act on ceramide phosphoethanolamine (CPE), lysophosphatidylcholine (LPC) and lysophosphatidylethanolamine (LPE), but not on lysophosphatidylserine (LPS), and lysophosphatidylglycerol (LPG). It acts by transphosphatidylation, releasing exclusively cyclic phosphate products as second products. Induces dermonecrosis, hemolysis, increased vascular permeability, edema, inflammatory response, and platelet aggregation. The polypeptide is Dermonecrotic toxin SdSicTox-betaIIB1bxiv (Sicarius cf. damarensis (strain GJB-2008) (Six-eyed sand spider)).